Reading from the N-terminus, the 211-residue chain is Peptide methionine sulfoxide reductase MsrA (211 aa).

Residue Cys52 is part of the active site.

This sequence belongs to the MsrA Met sulfoxide reductase family.

The catalysed reaction is L-methionyl-[protein] + [thioredoxin]-disulfide + H2O = L-methionyl-(S)-S-oxide-[protein] + [thioredoxin]-dithiol. The enzyme catalyses [thioredoxin]-disulfide + L-methionine + H2O = L-methionine (S)-S-oxide + [thioredoxin]-dithiol. Its function is as follows. Has an important function as a repair enzyme for proteins that have been inactivated by oxidation. Catalyzes the reversible oxidation-reduction of methionine sulfoxide in proteins to methionine. This Klebsiella pneumoniae (strain 342) protein is Peptide methionine sulfoxide reductase MsrA.